We begin with the raw amino-acid sequence, 96 residues long: (4S)-4-hydroxy-5-phosphonooxypentane-2,3-dione isomerase (96 aa).

An ABM domain is found at His2–Phe91.

The protein belongs to the LsrG family. In terms of assembly, homodimer.

It localises to the cytoplasm. It catalyses the reaction (2S)-2-hydroxy-3,4-dioxopentyl phosphate = 3-hydroxy-2,4-dioxopentyl phosphate. Its function is as follows. Involved in the degradation of phospho-AI-2, thereby terminating induction of the lsr operon and closing the AI-2 signaling cycle. Catalyzes the conversion of (4S)-4-hydroxy-5-phosphonooxypentane-2,3-dione (P-DPD) to 3-hydroxy-5-phosphonooxypentane-2,4-dione (P-HPD). In Escherichia coli O157:H7, this protein is (4S)-4-hydroxy-5-phosphonooxypentane-2,3-dione isomerase.